The chain runs to 1457 residues: Ras guanine nucleotide exchange factor C (1457 aa).

Residues 1–55 form an RCC1 1 repeat; sequence MSVFTFGHGSNGALGLGKITDDTCPTPQKVNYFTEIDKRVKKVACGSYHTVFVTD. Disordered stretches follow at residues 75 to 196, 209 to 264, 282 to 313, and 376 to 404; these read FYTS…PLLN, HYES…RINK, EQQQQPQQPQQNLKGIMNQPPLPTNDDLDEDP, and QQQLQQQQSMSSLQPSASSSSPSSSSLQT. Low complexity-rich tracts occupy residues 83 to 121 and 134 to 158; these read TTTTTTTTSSTSATTTTTNGMVNEKNNNNKNNNGEKIVN and SNTTNDSTSSSSTSTSSLSSSLPPT. Basic and acidic residues-rich tracts occupy residues 171-188 and 209-224; these read IKLDKGIPHHRSTRELIQ and HYESNEKSKDEMKDNE. Over residues 225–237 the composition is skewed to acidic residues; sequence NENEEDEDDDDDD. A compositionally biased stretch (basic and acidic residues) spans 238–249; that stretch reads STIRQNEDKESS. Low complexity-rich tracts occupy residues 283–292 and 376–403; these read QQQQPQQPQQ and QQQLQQQQSMSSLQPSASSSSPSSSSLQ. RCC1 repeat units lie at residues 351–401, 432–483, 485–549, and 590–647; these read GGNV…SSSS, WGEL…CYTE, GKMY…VLTQ, and SGEV…ALVE. A DH domain is found at 650–971; it reads PKTKLALQLV…QVLLERMNQN (322 aa). The span at 703 to 715 shows a compositional bias: low complexity; that stretch reads LPPSLKGLSGGLP. The segment at 703–762 is disordered; the sequence is LPPSLKGLSGGLPDNANNTIKNGKDKDNHHNGDSNGHHSNGHYHGNGNNGNNSITTSNSI. Residues 724-738 show a composition bias toward basic and acidic residues; that stretch reads NGKDKDNHHNGDSNG. Residues 739–762 are compositionally biased toward low complexity; that stretch reads HHSNGHYHGNGNNGNNSITTSNSI. An N-terminal Ras-GEF domain is found at 989–1109; it reads GNPQIMGGSL…SVSQIKLQYF (121 aa). The tract at residues 1127–1210 is disordered; the sequence is LTQNEITTPP…NNNNNNNNLT (84 aa). Positions 1138 to 1211 form a coiled coil; the sequence is LQIQNNNQNN…NNNNNNNLTN (74 aa). The segment covering 1142 to 1210 has biased composition (low complexity); sequence NNNQNNNLEN…NNNNNNNNLT (69 aa). The 223-residue stretch at 1232-1454 folds into the Ras-GEF domain; the sequence is QPIEVAQTLT…DDKQAQKISS (223 aa).

In terms of biological role, promotes the exchange of Ras-bound GDP by GTP. In Dictyostelium discoideum (Social amoeba), this protein is Ras guanine nucleotide exchange factor C (gefC).